Here is a 103-residue protein sequence, read N- to C-terminus: Histone H4.1 (103 aa).

The segment covering 1-14 has biased composition (gly residues); sequence MSGRGKGGKGLGKG. The disordered stretch occupies residues 1 to 20; it reads MSGRGKGGKGLGKGGAKRHR. Lysine 6 bears the N6-acetyl-N6-methyllysine; alternate mark. An N6-methyllysine; alternate mark is found at lysine 6, lysine 9, and lysine 13. An N6-acetyl-N6-methyllysine; alternate modification is found at lysine 13. The DNA-binding element occupies 17–21; sequence KRHRK. Lysine 92 carries the N6-glutaryllysine modification.

This sequence belongs to the histone H4 family. As to quaternary structure, the nucleosome is a histone octamer containing two molecules each of H2A, H2B, H3 and H4 assembled in one H3-H4 heterotetramer and two H2A-H2B heterodimers. The octamer wraps approximately 147 bp of DNA. Post-translationally, glutarylation at Lys-92 (H4K91glu) destabilizes nucleosomes by promoting dissociation of the H2A-H2B dimers from nucleosomes.

Its subcellular location is the nucleus. It is found in the chromosome. Its function is as follows. Core component of nucleosome. Nucleosomes wrap and compact DNA into chromatin, limiting DNA accessibility to the cellular machineries which require DNA as a template. Histones thereby play a central role in transcription regulation, DNA repair, DNA replication and chromosomal stability. DNA accessibility is regulated via a complex set of post-translational modifications of histones, also called histone code, and nucleosome remodeling. The chain is Histone H4.1 (HHF1) from Eremothecium gossypii (strain ATCC 10895 / CBS 109.51 / FGSC 9923 / NRRL Y-1056) (Yeast).